The primary structure comprises 289 residues: Diaminopimelate epimerase (289 aa).

Positions 15 and 76 each coordinate substrate. C85 serves as the catalytic Proton donor. Substrate is bound by residues 86-87 (GN), N158, N191, and 209-210 (ER). Catalysis depends on C218, which acts as the Proton acceptor. 219-220 (GT) serves as a coordination point for substrate.

Belongs to the diaminopimelate epimerase family. Homodimer.

Its subcellular location is the cytoplasm. It catalyses the reaction (2S,6S)-2,6-diaminopimelate = meso-2,6-diaminopimelate. Its pathway is amino-acid biosynthesis; L-lysine biosynthesis via DAP pathway; DL-2,6-diaminopimelate from LL-2,6-diaminopimelate: step 1/1. In terms of biological role, catalyzes the stereoinversion of LL-2,6-diaminopimelate (L,L-DAP) to meso-diaminopimelate (meso-DAP), a precursor of L-lysine and an essential component of the bacterial peptidoglycan. This chain is Diaminopimelate epimerase, found in Streptomyces coelicolor (strain ATCC BAA-471 / A3(2) / M145).